We begin with the raw amino-acid sequence, 498 residues long: Zinc finger protein 395 (498 aa).

Residues 129–165 (QKPLSSPIEQSLPTSPGATSTSAQRSVSRSIDVPKRR) are disordered. The segment covering 130-157 (KPLSSPIEQSLPTSPGATSTSAQRSVSR) has biased composition (polar residues). Positions 171 to 180 (MDEMMAAMVL) match the Nuclear export signal motif. The segment at 209–245 (KEGGDVSDSGSSTTSGHWSASSGVSTPSPPHTDASPK) is disordered. A compositionally biased stretch (low complexity) spans 214-231 (VSDSGSSTTSGHWSASSG). The C2H2-type zinc finger occupies 285–310 (YKCLWPNCGKLLRSIVGIKRHVKTQH).

It is found in the cytoplasm. The protein resides in the nucleus. The chain is Zinc finger protein 395 (znf395) from Xenopus laevis (African clawed frog).